A 70-amino-acid chain; its full sequence is Movement protein TGBp3 (70 aa).

The Lumenal segment spans residues 1–4 (MFPR). A helical transmembrane segment spans residues 5 to 25 (SGLGLAVAAAVVAYLVLLLAQ). Topologically, residues 26-70 (QLYMSNSSQCTIVITGESVSVVGCVYSEAFIELVKGLKPYYHPLG) are cytoplasmic.

It belongs to the Tymovirales TGBp3 protein family.

The protein resides in the host endoplasmic reticulum membrane. Functionally, plays a role in viral cell-to-cell propagation, by facilitating genome transport to neighboring plant cells through plasmosdesmata. May induce the formation of granular vesicles derived from the Endoplasmic reticulum, which align on actin filaments. The polypeptide is Movement protein TGBp3 (Crataegus (hawthorn)).